A 189-amino-acid polypeptide reads, in one-letter code: UPF0301 protein CCA_00630 (189 aa).

It belongs to the UPF0301 (AlgH) family.

This chain is UPF0301 protein CCA_00630, found in Chlamydia caviae (strain ATCC VR-813 / DSM 19441 / 03DC25 / GPIC) (Chlamydophila caviae).